The following is a 396-amino-acid chain: Tryptophan synthase beta chain (396 aa).

The residue at position 86 (Lys-86) is an N6-(pyridoxal phosphate)lysine.

It belongs to the TrpB family. In terms of assembly, tetramer of two alpha and two beta chains. The cofactor is pyridoxal 5'-phosphate.

It catalyses the reaction (1S,2R)-1-C-(indol-3-yl)glycerol 3-phosphate + L-serine = D-glyceraldehyde 3-phosphate + L-tryptophan + H2O. It participates in amino-acid biosynthesis; L-tryptophan biosynthesis; L-tryptophan from chorismate: step 5/5. Its function is as follows. The beta subunit is responsible for the synthesis of L-tryptophan from indole and L-serine. This chain is Tryptophan synthase beta chain, found in Aliivibrio salmonicida (strain LFI1238) (Vibrio salmonicida (strain LFI1238)).